Here is a 228-residue protein sequence, read N- to C-terminus: U1 small nuclear ribonucleoprotein C-2 (228 aa).

The Matrin-type zinc finger occupies 4 to 36 (YYCDYCDTYLTHDSPSVRKQHNAGYKHKANVRT). Positions 105–228 (PGVRPPILPA…SYALPSEGNH (124 aa)) are disordered. Composition is skewed to pro residues over residues 107–156 (VRPP…PPGS) and 164–175 (LPRPPTLPPPTS). Positions 178-190 (PGAPIPNSAAPPA) are enriched in low complexity. Pro residues predominate over residues 196–214 (PPAPAGPTSGAPPAPPTAP).

It belongs to the U1 small nuclear ribonucleoprotein C family. U1 snRNP is composed of the 7 core Sm proteins B/B', D1, D2, D3, E, F and G that assemble in a heptameric protein ring on the Sm site of the small nuclear RNA to form the core snRNP, and at least 3 U1 snRNP-specific proteins U1-70K, U1-A and U1-C. U1-C interacts with U1 snRNA and the 5' splice-site region of the pre-mRNA.

The protein resides in the nucleus. Component of the spliceosomal U1 snRNP, which is essential for recognition of the pre-mRNA 5' splice-site and the subsequent assembly of the spliceosome. U1-C is directly involved in initial 5' splice-site recognition for both constitutive and regulated alternative splicing. The interaction with the 5' splice-site seems to precede base-pairing between the pre-mRNA and the U1 snRNA. Stimulates commitment or early (E) complex formation by stabilizing the base pairing of the 5' end of the U1 snRNA and the 5' splice-site region. This is U1 small nuclear ribonucleoprotein C-2 from Sorghum bicolor (Sorghum).